A 517-amino-acid chain; its full sequence is GMP synthase [glutamine-hydrolyzing] (517 aa).

Residues 9 to 199 (RILILDFGSQ…VLNVCGCEGL (191 aa)) form the Glutamine amidotransferase type-1 domain. Catalysis depends on cysteine 86, which acts as the Nucleophile. Residues histidine 173 and glutamate 175 contribute to the active site. The GMPS ATP-PPase domain maps to 200-392 (WTSASIIEDA…LGLPYNMLYR (193 aa)). 227-233 (SGGVDSS) contacts ATP.

In terms of assembly, homodimer.

The enzyme catalyses XMP + L-glutamine + ATP + H2O = GMP + L-glutamate + AMP + diphosphate + 2 H(+). It functions in the pathway purine metabolism; GMP biosynthesis; GMP from XMP (L-Gln route): step 1/1. Its function is as follows. Catalyzes the synthesis of GMP from XMP. This Aliivibrio salmonicida (strain LFI1238) (Vibrio salmonicida (strain LFI1238)) protein is GMP synthase [glutamine-hydrolyzing].